A 408-amino-acid polypeptide reads, in one-letter code: MTLTIDTSTPESRALLRPDPTVEKKPLIGLSREEMAQALASIGVPERQVNMRVRQLWHWLYVRGVSDFSRMFNISKELRAKLDEHFTIARPEIVEEQISQDGTRKWLLRFPPRGAGRPVEVETVYIPEEDRGTLCISSQVGCTLTCSFCHTGTQKMVRNLTAGEILDQLLIARDRLGDFPDADTPDGAIVPAEGRKITNIVMMGMGEPLYNFENVKQALLVASDGDGLSLSKRRITLSTSGVVPEIYRTGEEIGIMLAISLHAVRDELRNELVPINKKYPLKDLLDACRAYPGLSNARRITFEYVMLKGVNDSLDDARELVRLLKGIPAKINLIPFNPWPGSAYECSDWEQIEKFAELVNRAGYASPIRTPRGRDILAACGQLKSASERMKKTERLKLEAMMIAGHGD.

Glu-122 (proton acceptor) is an active-site residue. The Radical SAM core domain occupies 128–369; sequence EEDRGTLCIS…NRAGYASPIR (242 aa). The cysteines at positions 135 and 380 are disulfide-linked. Positions 142, 146, and 149 each coordinate [4Fe-4S] cluster. Residues 206 to 207, Ser-238, 260 to 262, and Asn-337 contribute to the S-adenosyl-L-methionine site; these read GE and SLH. Cys-380 serves as the catalytic S-methylcysteine intermediate.

It belongs to the radical SAM superfamily. RlmN family. Requires [4Fe-4S] cluster as cofactor.

It localises to the cytoplasm. The enzyme catalyses adenosine(2503) in 23S rRNA + 2 reduced [2Fe-2S]-[ferredoxin] + 2 S-adenosyl-L-methionine = 2-methyladenosine(2503) in 23S rRNA + 5'-deoxyadenosine + L-methionine + 2 oxidized [2Fe-2S]-[ferredoxin] + S-adenosyl-L-homocysteine. It carries out the reaction adenosine(37) in tRNA + 2 reduced [2Fe-2S]-[ferredoxin] + 2 S-adenosyl-L-methionine = 2-methyladenosine(37) in tRNA + 5'-deoxyadenosine + L-methionine + 2 oxidized [2Fe-2S]-[ferredoxin] + S-adenosyl-L-homocysteine. Specifically methylates position 2 of adenine 2503 in 23S rRNA and position 2 of adenine 37 in tRNAs. m2A2503 modification seems to play a crucial role in the proofreading step occurring at the peptidyl transferase center and thus would serve to optimize ribosomal fidelity. This chain is Dual-specificity RNA methyltransferase RlmN, found in Chelativorans sp. (strain BNC1).